The following is a 279-amino-acid chain: Tryptophan 2,3-dioxygenase (279 aa).

Substrate-binding positions include 48-52 (FIVIH), Tyr-110, and Arg-114. Position 237 (His-237) interacts with heme. Thr-251 provides a ligand contact to substrate.

This sequence belongs to the tryptophan 2,3-dioxygenase family. As to quaternary structure, homotetramer. Heme serves as cofactor.

The catalysed reaction is L-tryptophan + O2 = N-formyl-L-kynurenine. It participates in amino-acid degradation; L-tryptophan degradation via kynurenine pathway; L-kynurenine from L-tryptophan: step 1/2. Functionally, heme-dependent dioxygenase that catalyzes the oxidative cleavage of the L-tryptophan (L-Trp) pyrrole ring and converts L-tryptophan to N-formyl-L-kynurenine. Catalyzes the oxidative cleavage of the indole moiety. The sequence is that of Tryptophan 2,3-dioxygenase from Bacillus cereus (strain ZK / E33L).